We begin with the raw amino-acid sequence, 171 residues long: PBAN-type neuropeptides (171 aa).

The signal sequence occupies residues 1–22; that stretch reads MFRLYFFFNVICIFLAIRSAIG. Positions 23–47 are excised as a propeptide; it reads GEVPDATEQKINNFLASGKDSEDLS. Leu-59 bears the Leucine amide mark. Residues 63-111 constitute a propeptide that is removed on maturation; that stretch reads TIASELHDEMMDEIDDNPLYYSGESPQRVASEIAQGTPYVVLLLTGRVL. A disordered region spans residues 120 to 151; that stretch reads HSTTPRLGRRDASSSNENNSRPPFAPRLGRNL. Leucine amide occurs at positions 126, 147, and 157. The propeptide occupies 160 to 171; the sequence is SFGAPVVDNFAY.

This sequence belongs to the pyrokinin family.

The protein resides in the secreted. In terms of biological role, a hormone that controls sex pheromone production in females and pheromone responsiveness in male. Also mediates visceral muscle contractile activity (myotropic activity). This Aedes aegypti (Yellowfever mosquito) protein is PBAN-type neuropeptides.